A 593-amino-acid polypeptide reads, in one-letter code: Chromodomain Y-like protein (593 aa).

The segment covering 1–14 (MGIGNSQPNSQEAQ) has biased composition (polar residues). The interval 1–30 (MGIGNSQPNSQEAQLCTLPEKAEQPTDDNT) is disordered. One can recognise a Chromo domain in the interval 56 to 116 (TQVESIVDKR…RHNERQKEGS (61 aa)). Residues 56 to 304 (TQVESIVDKR…TIQTSVTGVT (249 aa)) are interaction with EZH2. A Phosphoserine modification is found at S83. The interval 110-158 (ERQKEGSLARASRASPSNARKQISRSTHSTLSKTNSKALVVGKDHESKS) is disordered. The segment covering 117–129 (LARASRASPSNAR) has biased composition (low complexity). K130 carries the N6,N6,N6-trimethyllysine; by EHMT2; alternate modification. The residue at position 130 (K130) is an N6,N6-dimethyllysine; by EHMT2; alternate. K130 is modified (N6-methyllysine; by EHMT2; alternate). A compositionally biased stretch (polar residues) spans 133–146 (SRSTHSTLSKTNSK). Phosphoserine is present on residues S165, S196, and S211. Residues 200 to 223 (GRTSVDGFQGESPEKLDPVDQGAE) form a disordered region. The segment at 357 to 589 (SENNSLNPEV…DSMLKYLQRK (233 aa)) is acetyl-CoA-binding domain.

Forms multimers and multimerization is required for stable binding to chromatin. Interacts with HDAC1 and HDAC2 via its C-terminal acetyl-CoA-binding domain. Interacts with EZH2, EED, SUZ12, REST, EHMT1 and EHMT2. Part of a complex containing at least CDYL, REST, WIZ, SETB1, EHMT1 and EHMT2. Part of a complex containing at least CDYL, MIER1, MIER2, HDAC1 and HDAC2. Interacts with CHAF1A and CHAF1B; bridging the CAF-1 complex to the MCM2-7 (MCM) complex. Interacts with MCM3 and MCM5; bridging the CAF-1 complex to the MCM2-7 (MCM) complex. Interacts with EHMT2 and PRDM9; interaction only takes place when PRDM9 is bound to hotspot DNA. Highly expressed in testis (at protein level). Expressed in the hippocampus (at protein level). Expressed in the medial prefrontal cortex, prelimbic cortex, intralimbic cortex and cingulate cortex area (at protein level). Isoform 1: Expressed as 2 transcripts encoding the same protein, a ubiquitous transcript and a highly expressed testis-specific transcript.

It is found in the nucleus. The protein localises to the chromosome. It catalyses the reaction L-lysyl-[protein] + acetyl-CoA = N(6)-acetyl-L-lysyl-[protein] + CoA + H(+). The catalysed reaction is 3-hydroxybutanoyl-CoA = (2E)-butenoyl-CoA + H2O. Functionally, chromatin reader protein that recognizes and binds histone H3 trimethylated at 'Lys-9', dimethylated at 'Lys-27' and trimethylated at 'Lys-27' (H3K9me3, H3K27me2 and H3K27me3, respectively). Part of multimeric repressive chromatin complexes, where it is required for transmission and restoration of repressive histone marks, thereby preserving the epigenetic landscape. Required for chromatin targeting and maximal enzymatic activity of Polycomb repressive complex 2 (PRC2); acts as a positive regulator of PRC2 activity by bridging the pre-existing histone H3K27me3 and newly recruited PRC2 on neighboring nucleosomes. Acts as a corepressor for REST by facilitating histone-lysine N-methyltransferase EHMT2 recruitment and H3K9 dimethylation at REST target genes for repression. Involved in X chromosome inactivation in females: recruited to Xist RNA-coated X chromosome and facilitates propagation of H3K9me2 by anchoring EHMT2. Promotes EZH2 accumulation and H3K27me3 methylation at DNA double strand breaks (DSBs), thereby facilitating transcriptional repression at sites of DNA damage and homology-directed repair of DSBs. Required for neuronal migration during brain development by repressing expression of RHOA. By repressing the expression of SCN8A, contributes to the inhibition of intrinsic neuronal excitability and epileptogenesis. In addition to acting as a chromatin reader, acts as a hydro-lyase. Shows crotonyl-coA hydratase activity by mediating the conversion of crotonyl-CoA ((2E)-butenoyl-CoA) to beta-hydroxybutyryl-CoA (3-hydroxybutanoyl-CoA), thereby acting as a negative regulator of histone crotonylation. Histone crotonylation is required during spermatogenesis; down-regulation of histone crotonylation by CDYL regulates the reactivation of sex chromosome-linked genes in round spermatids and histone replacement in elongating spermatids. By regulating histone crotonylation and trimethylation of H3K27, may be involved in stress-induced depression-like behaviors, possibly by regulating VGF expression. May have histone acetyltransferase activity; such activity is however unsure in vivo. Its function is as follows. Not able to recognize and bind histone H3K9me3, histone H3K27me2 and histone H3K27me3, due to the presence of a N-terminal extension that inactivates the chromo domain. In Mus musculus (Mouse), this protein is Chromodomain Y-like protein.